A 137-amino-acid polypeptide reads, in one-letter code: Large ribosomal subunit protein uL16 (137 aa).

Residues 1-13 (MLQPSRRKYRKEQ) show a composition bias toward basic residues. The disordered stretch occupies residues 1–22 (MLQPSRRKYRKEQKGRNTGLAT).

This sequence belongs to the universal ribosomal protein uL16 family. As to quaternary structure, part of the 50S ribosomal subunit.

Its function is as follows. Binds 23S rRNA and is also seen to make contacts with the A and possibly P site tRNAs. This is Large ribosomal subunit protein uL16 from Azoarcus sp. (strain BH72).